Here is a 130-residue protein sequence, read N- to C-terminus: Small ribosomal subunit protein uS8 (130 aa).

It belongs to the universal ribosomal protein uS8 family. In terms of assembly, part of the 30S ribosomal subunit. Contacts proteins S5 and S12.

One of the primary rRNA binding proteins, it binds directly to 16S rRNA central domain where it helps coordinate assembly of the platform of the 30S subunit. The sequence is that of Small ribosomal subunit protein uS8 from Pasteurella multocida (strain Pm70).